The following is a 379-amino-acid chain: Chaperone protein DnaJ (379 aa).

A J domain is found at 5–70 (DYYESLGVAK…QKRAAYDQYG (66 aa)). A CR-type zinc finger spans residues 134 to 212 (GVTKEIRIPA…CHGHGRVEKS (79 aa)). The Zn(2+) site is built by C147, C150, C164, C167, C186, C189, C200, and C203. 4 CXXCXGXG motif repeats span residues 147–154 (CDVCHGNG), 164–171 (CPTCHGNG), 186–193 (CPHCHGRG), and 200–207 (CIKCHGHG).

Belongs to the DnaJ family. As to quaternary structure, homodimer. Requires Zn(2+) as cofactor.

The protein resides in the cytoplasm. Functionally, participates actively in the response to hyperosmotic and heat shock by preventing the aggregation of stress-denatured proteins and by disaggregating proteins, also in an autonomous, DnaK-independent fashion. Unfolded proteins bind initially to DnaJ; upon interaction with the DnaJ-bound protein, DnaK hydrolyzes its bound ATP, resulting in the formation of a stable complex. GrpE releases ADP from DnaK; ATP binding to DnaK triggers the release of the substrate protein, thus completing the reaction cycle. Several rounds of ATP-dependent interactions between DnaJ, DnaK and GrpE are required for fully efficient folding. Also involved, together with DnaK and GrpE, in the DNA replication of plasmids through activation of initiation proteins. This chain is Chaperone protein DnaJ, found in Pectobacterium atrosepticum (strain SCRI 1043 / ATCC BAA-672) (Erwinia carotovora subsp. atroseptica).